The primary structure comprises 245 residues: Interleukin-1 receptor-associated kinase 1-binding protein 1 homolog (245 aa).

Belongs to the IRAK1BP1 family.

The protein localises to the cytoplasm. Its subcellular location is the nucleus. In terms of biological role, may be part of a signaling pathway that leads to NF-kappa-B activation. This is Interleukin-1 receptor-associated kinase 1-binding protein 1 homolog (irak1bp1) from Xenopus laevis (African clawed frog).